Consider the following 435-residue polypeptide: Eukaryotic translation initiation factor 3 subunit E (435 aa).

One can recognise a PCI domain in the interval 219 to 392 (FFNHAKGRDL…GHVVMGTQPL (174 aa)).

The protein belongs to the eIF-3 subunit E family. In terms of assembly, component of the eukaryotic translation initiation factor 3 (eIF-3) complex.

The protein resides in the cytoplasm. In terms of biological role, component of the eukaryotic translation initiation factor 3 (eIF-3) complex, which is involved in protein synthesis of a specialized repertoire of mRNAs and, together with other initiation factors, stimulates binding of mRNA and methionyl-tRNAi to the 40S ribosome. The eIF-3 complex specifically targets and initiates translation of a subset of mRNAs involved in cell proliferation. This chain is Eukaryotic translation initiation factor 3 subunit E (eIF3-S6), found in Culex quinquefasciatus (Southern house mosquito).